The sequence spans 1149 residues: Probable phospholipid-transporting ATPase IA (1149 aa).

Topologically, residues 1 to 65 (MPTMRRTVSE…TAKYNIITFL (65 aa)) are cytoplasmic. Serine 25 bears the Phosphoserine mark. Position 28 is a phosphothreonine (threonine 28). Serine 29 carries the post-translational modification Phosphoserine. The chain crosses the membrane as a helical span at residues 66–86 (PRFLYSQFRRAANSFFLFIAL). Residues 87 to 92 (LQQIPD) lie on the Extracellular side of the membrane. Residues 93-115 (VSPTGRYTTLVPLLFILAVAAIK) traverse the membrane as a helical segment. Over 116–297 (EIIEDIKRHK…SNVERITNVQ (182 aa)) the chain is Cytoplasmic. The helical transmembrane segment at 298–319 (ILILFCILIAMSLVCSVGSAIW) threads the bilayer. Residues 320–344 (NRRHSGRDWYLNLNYGGANNFGLNF) lie on the Extracellular side of the membrane. A helical membrane pass occupies residues 345–366 (LTFIILFNNLIPISLLVTLEVV). Topologically, residues 367-842 (KFTQAYFINW…GAWNYNRGSK (476 aa)) are cytoplasmic. Residue aspartate 409 is the 4-aspartylphosphate intermediate of the active site. ATP-binding positions include aspartate 409, lysine 410, threonine 411, glutamate 493, phenylalanine 534, lysine 557, arginine 590, threonine 670, glycine 671, aspartate 672, 726 to 733 (ALIIDGKT), arginine 760, and lysine 766. Residue aspartate 409 participates in Mg(2+) binding. Threonine 411 contributes to the Mg(2+) binding site. Mg(2+) is bound at residue aspartate 786. 2 residues coordinate ATP: asparagine 789 and aspartate 790. Aspartate 790 contacts Mg(2+). A helical membrane pass occupies residues 843 to 863 (CILYCFYKNIVLYIIEIWFAF). Over 864–875 (VNGFSGQILFER) the chain is Extracellular. The chain crosses the membrane as a helical span at residues 876 to 895 (WCIGLYNVMFTAMPPLTLGI). At 896–925 (FERSCRKEYMLKYPELYKTSQNALDFNTKV) the chain is on the cytoplasmic side. A helical membrane pass occupies residues 926 to 947 (FWVHCLNGLFHSVILFWFPLKA). Residues 948–961 (LQYGTVFENGRTSD) are Extracellular-facing. The chain crosses the membrane as a helical span at residues 962–984 (YLLLGNFVYTFVVITVCLKAGLE). Residues 985 to 990 (TSYWTW) lie on the Cytoplasmic side of the membrane. Residues 991-1011 (FSHIAIWGSIALWVVFFGIYS) form a helical membrane-spanning segment. The Extracellular segment spans residues 1012–1029 (SLWPAVPMAPDMSGEAAM). A helical transmembrane segment spans residues 1030–1055 (LFSSGVFWMGLLFIPVASLLLDVVYK). Residues 1056–1149 (VIKRTAFKTL…DTTKQRPDEW (94 aa)) lie on the Cytoplasmic side of the membrane. Position 1080 to 1087 (1080 to 1087 (GAVVLGKS)) interacts with ATP. Phosphoserine is present on serine 1111.

The protein belongs to the cation transport ATPase (P-type) (TC 3.A.3) family. Type IV subfamily. As to quaternary structure, component of a P4-ATPase flippase complex which consists of a catalytic alpha subunit and an accessory beta subunit. Interacts with TMEM30A to form a flippase complex; this complex forms an intermediate phosphoenzyme. Interacts with TMEM30B; this interaction is reported conflictingly. Mg(2+) serves as cofactor. In terms of processing, cleaved by calpain in a caspase- and calcium influx-dependent manner during platelet apoptosis leading to a 100 kDa polypeptide. As to expression, kidney.

It is found in the cytoplasmic vesicle. Its subcellular location is the secretory vesicle. The protein localises to the chromaffin granule membrane. The protein resides in the cytoplasmic granule. It localises to the cell membrane. It is found in the endoplasmic reticulum. Its subcellular location is the golgi apparatus. The enzyme catalyses ATP + H2O + phospholipidSide 1 = ADP + phosphate + phospholipidSide 2.. It catalyses the reaction a 1,2-diacyl-sn-glycero-3-phospho-L-serine(out) + ATP + H2O = a 1,2-diacyl-sn-glycero-3-phospho-L-serine(in) + ADP + phosphate + H(+). Catalytic component of a P4-ATPase flippase complex which catalyzes the hydrolysis of ATP coupled to the transport of aminophospholipids from the outer to the inner leaflet of various membranes and ensures the maintenance of asymmetric distribution of phospholipids. Phospholipid translocation also seems to be implicated in vesicle formation and in uptake of lipid signaling molecules. In vitro, its ATPase activity is selectively and stereospecifically stimulated by phosphatidylserine (PS). The flippase complex ATP8A1:TMEM30A seems to play a role in regulation of cell migration probably involving flippase-mediated translocation of phosphatidylethanolamine (PE) at the cell membrane. Acts as aminophospholipid translocase at the cell membrane in neuronal cells. This Bos taurus (Bovine) protein is Probable phospholipid-transporting ATPase IA.